The following is a 474-amino-acid chain: Chromosomal replication initiator protein DnaA (474 aa).

Residues 1-91 (MSEELWQRCL…STRASTPAAS (91 aa)) are domain I, interacts with DnaA modulators. The segment at 89-138 (AASYFNGSSSSSSNGPITTPAAAPAPRQPESDSRPQPTSLGGARKHRSNL) is disordered. Residues 91–136 (SYFNGSSSSSSNGPITTPAAAPAPRQPESDSRPQPTSLGGARKHRS) are domain II. A compositionally biased stretch (low complexity) spans 96 to 113 (SSSSSSNGPITTPAAAPA). Positions 137–354 (NLNTGFTFST…GALRRVIAHV (218 aa)) are domain III, AAA+ region. The ATP site is built by Gly-182, Gly-184, Lys-185, and Thr-186. Residues 355–474 (RFTGAQIDIG…YLNLLRTLTS (120 aa)) form a domain IV, binds dsDNA region.

This sequence belongs to the DnaA family. In terms of assembly, oligomerizes as a right-handed, spiral filament on DNA at oriC.

The protein localises to the cytoplasm. Its function is as follows. Plays an essential role in the initiation and regulation of chromosomal replication. ATP-DnaA binds to the origin of replication (oriC) to initiate formation of the DNA replication initiation complex once per cell cycle. Binds the DnaA box (a 9 base pair repeat at the origin) and separates the double-stranded (ds)DNA. Forms a right-handed helical filament on oriC DNA; dsDNA binds to the exterior of the filament while single-stranded (ss)DNA is stabiized in the filament's interior. The ATP-DnaA-oriC complex binds and stabilizes one strand of the AT-rich DNA unwinding element (DUE), permitting loading of DNA polymerase. After initiation quickly degrades to an ADP-DnaA complex that is not apt for DNA replication. Binds acidic phospholipids. In Alcanivorax borkumensis (strain ATCC 700651 / DSM 11573 / NCIMB 13689 / SK2), this protein is Chromosomal replication initiator protein DnaA.